Consider the following 310-residue polypeptide: Glutaminase 1 (310 aa).

Residues Ser-66, Asn-117, Glu-161, Asn-168, Tyr-192, Tyr-244, and Val-262 each contribute to the substrate site. N6-acetyllysine is present on Lys-294.

This sequence belongs to the glutaminase family. As to quaternary structure, homotetramer.

It catalyses the reaction L-glutamine + H2O = L-glutamate + NH4(+). This Shigella flexneri protein is Glutaminase 1.